Consider the following 494-residue polypeptide: Lysine--tRNA ligase (494 aa).

E407 and E414 together coordinate Mg(2+).

Belongs to the class-II aminoacyl-tRNA synthetase family. As to quaternary structure, homodimer. Requires Mg(2+) as cofactor.

It localises to the cytoplasm. It catalyses the reaction tRNA(Lys) + L-lysine + ATP = L-lysyl-tRNA(Lys) + AMP + diphosphate. The protein is Lysine--tRNA ligase of Lactococcus lactis subsp. cremoris (strain MG1363).